A 159-amino-acid chain; its full sequence is MATKSKKKILKTVSVVDISCGNCIKPTFASIFNFFSKKPKRPSSTYRHCHSSISSATPSSTPLATASVAVEKDSDDPYLDFRQSMLQMILENQIYSKDELRELLQCFLSLNSHYHHGIIVRAFSEIWEDVSSAAASAVEASPLITRHVSRASRDYYNYY.

Residues 39–60 (PKRPSSTYRHCHSSISSATPSS) form a disordered region. Residues 51–60 (SSISSATPSS) show a composition bias toward low complexity. Positions 70–129 (VEKDSDDPYLDFRQSMLQMILENQIYSKDELRELLQCFLSLNSHYHHGIIVRAFSEIWED) constitute an OVATE domain.

Interacts with KNAT1 and KNAT7. As to expression, expressed in roots, shoots, rosette and cauline leaves, stems, flower buds and siliques.

The protein resides in the nucleus. In terms of biological role, transcriptional repressor that regulates multiple aspects of plant growth and development through the regulation of BEL1-LIKE (BLH) and KNOX TALE (KNAT) homeodomain transcription factors. The protein is Transcription repressor OFP6 (OFP6) of Arabidopsis thaliana (Mouse-ear cress).